The chain runs to 394 residues: Elongation factor Tu (394 aa).

Positions lysine 10–isoleucine 204 constitute a tr-type G domain. The segment at glycine 19–threonine 26 is G1. A GTP-binding site is contributed by glycine 19 to threonine 26. Threonine 26 contributes to the Mg(2+) binding site. The G2 stretch occupies residues glycine 60–serine 64. Positions aspartate 81–glycine 84 are G3. GTP-binding positions include aspartate 81–histidine 85 and asparagine 136–aspartate 139. Residues asparagine 136–aspartate 139 are G4. The G5 stretch occupies residues serine 174 to leucine 176.

It belongs to the TRAFAC class translation factor GTPase superfamily. Classic translation factor GTPase family. EF-Tu/EF-1A subfamily. In terms of assembly, monomer.

It localises to the cytoplasm. The catalysed reaction is GTP + H2O = GDP + phosphate + H(+). Functionally, GTP hydrolase that promotes the GTP-dependent binding of aminoacyl-tRNA to the A-site of ribosomes during protein biosynthesis. The polypeptide is Elongation factor Tu (Rickettsia prowazekii (strain Madrid E)).